A 437-amino-acid chain; its full sequence is Carbonic anhydrase 9 (437 aa).

The first 31 residues, 1–31 (MASLGPSPWAPLSTPAPTAQLLLFLLLQVSA), serve as a signal peptide directing secretion. Positions 32-95 (QPQGLSGMQG…RMEESLGLED (64 aa)) are proteoglycan-like (PG). Residues 32–390 (QPQGLSGMQG…HVNSCFTAGD (359 aa)) are Extracellular-facing. The tract at residues 34 to 118 (QGLSGMQGEP…HGDEKGGGHS (85 aa)) is disordered. Over residues 50 to 79 (SGEDELGVDVLPSEEDAPEEADPPDGEDPP) the composition is skewed to acidic residues. The interval 96–390 (LSTPEAPEHS…HVNSCFTAGD (295 aa)) is catalytic. O-linked (GlcNAc...) threonine glycosylation is present at Thr98. An Alpha-carbonic anhydrase domain is found at 118 to 369 (SHWSYGGTLL…LNGRTIEASF (252 aa)). Cysteines 135 and 315 form a disulfide. The active-site Proton donor/acceptor is the His179. Residues His205, His207, and His230 each coordinate Zn(2+). Substrate is bound at residue 311–312 (TT). N-linked (GlcNAc...) asparagine glycosylation occurs at Asn325. Residues 391-411 (ILALVFGLLFAVTSIAFLLQL) form a helical membrane-spanning segment. Topologically, residues 412–437 (RRQHRHRSGTKDRVSYSPAEMTETGA) are cytoplasmic. Phosphotyrosine is present on Tyr427.

It belongs to the alpha-carbonic anhydrase family. In terms of assembly, forms oligomers linked by disulfide bonds. The cofactor is Zn(2+). In terms of processing, asn-325 bears high-mannose type glycan structures.

The protein localises to the nucleus. Its subcellular location is the nucleolus. It is found in the cell membrane. It localises to the cell projection. The protein resides in the microvillus membrane. The enzyme catalyses hydrogencarbonate + H(+) = CO2 + H2O. Inhibited by acetazolamide. Its function is as follows. Catalyzes the interconversion between carbon dioxide and water and the dissociated ions of carbonic acid (i.e. bicarbonate and hydrogen ions). This chain is Carbonic anhydrase 9 (Ca9), found in Mus musculus (Mouse).